Consider the following 932-residue polypeptide: Probable serine/threonine-protein kinase clkA (932 aa).

Residues 1 to 10 show a composition bias toward basic residues; that stretch reads MDRFQTKRKT. Disordered stretches follow at residues 1–21, 39–198, and 212–562; these read MDRF…NNDY, YKNN…YGDT, and NDYD…TNTN. 2 stretches are compositionally biased toward low complexity: residues 11-21 and 39-123; these read YSYNGYSNNDY and YKNN…ENNY. The segment covering 124–143 has biased composition (polar residues); that stretch reads FQSENQSNKDQNSYFNSSYL. 4 stretches are compositionally biased toward low complexity: residues 148 to 196, 218 to 305, 314 to 342, and 351 to 562; these read DNYN…NSYG, NNNN…NGGN, VFNN…NNDY, and NIYS…TNTN. Residues 590–920 form the Protein kinase domain; sequence YKVLCTVGSG…ASDALSHPFL (331 aa). ATP is bound by residues 596 to 604 and lysine 619; that span reads VGSGTFSTV. Aspartate 719 functions as the Proton acceptor in the catalytic mechanism.

The protein belongs to the protein kinase superfamily. CMGC Ser/Thr protein kinase family.

It carries out the reaction L-seryl-[protein] + ATP = O-phospho-L-seryl-[protein] + ADP + H(+). The enzyme catalyses L-threonyl-[protein] + ATP = O-phospho-L-threonyl-[protein] + ADP + H(+). The polypeptide is Probable serine/threonine-protein kinase clkA (clkA) (Dictyostelium discoideum (Social amoeba)).